Consider the following 735-residue polypeptide: Ion-translocating oxidoreductase complex subunit C (735 aa).

4Fe-4S ferredoxin-type domains lie at 368–397 and 407–436; these read MGAP…QQLY and KATA…VQYF. Positions 377, 380, 383, 387, 416, 419, 422, and 426 each coordinate [4Fe-4S] cluster. The segment at 534–711 is disordered; it reads QARAKQAAHP…EPVEPADPRK (178 aa).

Belongs to the 4Fe4S bacterial-type ferredoxin family. RnfC subfamily. As to quaternary structure, the complex is composed of six subunits: RsxA, RsxB, RsxC, RsxD, RsxE and RsxG. Requires [4Fe-4S] cluster as cofactor.

The protein resides in the cell inner membrane. Its function is as follows. Part of a membrane-bound complex that couples electron transfer with translocation of ions across the membrane. Required to maintain the reduced state of SoxR. In Salmonella paratyphi A (strain ATCC 9150 / SARB42), this protein is Ion-translocating oxidoreductase complex subunit C.